The primary structure comprises 301 residues: GTPase Era (301 aa).

An Era-type G domain is found at 7–175; it reads YCGFIAIVGR…AGIVRKHLPE (169 aa). A G1 region spans residues 15–22; it reads GRPNVGKS. A GTP-binding site is contributed by 15 to 22; it reads GRPNVGKS. The G2 stretch occupies residues 41–45; it reads QTTRH. Residues 62–65 form a G3 region; sequence DTPG. GTP contacts are provided by residues 62–66 and 124–127; these read DTPGL and NKVD. The interval 124–127 is G4; sequence NKVD. Residues 154 to 156 form a G5 region; sequence ISA. The KH type-2 domain maps to 206–283; it reads LGAELPYSVT…HLELWVKVKS (78 aa).

This sequence belongs to the TRAFAC class TrmE-Era-EngA-EngB-Septin-like GTPase superfamily. Era GTPase family. Monomer.

It localises to the cytoplasm. The protein localises to the cell inner membrane. Its function is as follows. An essential GTPase that binds both GDP and GTP, with rapid nucleotide exchange. Plays a role in 16S rRNA processing and 30S ribosomal subunit biogenesis and possibly also in cell cycle regulation and energy metabolism. The polypeptide is GTPase Era (Salmonella paratyphi B (strain ATCC BAA-1250 / SPB7)).